The sequence spans 229 residues: Bcl-2-like protein 1 (229 aa).

Positions 4-24 match the BH4 motif; the sequence is SNRELVIDFVSYKLSQRGHCW. Positions 82-96 match the BH3 motif; it reads VRQALRDAGDEFELR. The BH1 signature appears at 125 to 144; the sequence is ELFHDGVNWGRIVAFFSFGG. The BH2 signature appears at 176-191; the sequence is PWIQENGGWERFVDLY. The chain crosses the membrane as a helical span at residues 206–223; it reads FNKWLLTGATVAGVLLLG.

The protein belongs to the Bcl-2 family. As to expression, highest expression in organs with lymphoid development.

Its subcellular location is the mitochondrion membrane. It localises to the nucleus membrane. The protein localises to the mitochondrion matrix. The protein resides in the cytoplasm. It is found in the cytoskeleton. Its subcellular location is the microtubule organizing center. It localises to the centrosome. The protein localises to the cytosol. The protein resides in the cytoplasmic vesicle. It is found in the secretory vesicle. Its subcellular location is the synaptic vesicle membrane. In terms of biological role, dominant regulator of apoptotic cell death. The long form displays cell death repressor activity, whereas the short isoform promotes apoptosis. Also acts as a regulator of G2 checkpoint and progression to cytokinesis during mitosis. The sequence is that of Bcl-2-like protein 1 (BCL2L1) from Gallus gallus (Chicken).